The chain runs to 516 residues: Delta(24)-sterol reductase (516 aa).

Positions 1-22 are cleaved as a signal peptide; the sequence is MEPAVSLAVCALLFLLWVRVKG. Residues 23–31 lie on the Lumenal side of the membrane; sequence LEFVLIHQR. Residues 32 to 52 traverse the membrane as a helical segment; sequence WVFVCLFLLPLSLIFDIYYYV. Topologically, residues 53 to 516 are cytoplasmic; the sequence is RAWVVFKLSS…YDKICKAARH (464 aa). The region spanning 58–234 is the FAD-binding PCMH-type domain; the sequence is FKLSSAPRLH…VAAEIRIIPA (177 aa). Residue 163-175 coordinates FAD; that stretch reads TVGGLIMGTGIES.

Belongs to the FAD-binding oxidoreductase/transferase type 4 family. In terms of assembly, interacts with DHCR7; this interaction regulates DHCR7 activity. FAD serves as cofactor.

The protein resides in the endoplasmic reticulum membrane. It is found in the golgi apparatus membrane. The catalysed reaction is cholesterol + NADP(+) = desmosterol + NADPH + H(+). It catalyses the reaction lanosterol + NADPH + H(+) = 24,25-dihydrolanosterol + NADP(+). The enzyme catalyses 5alpha-cholest-8-en-3beta-ol + NADP(+) = zymosterol + NADPH + H(+). Its pathway is steroid biosynthesis; cholesterol biosynthesis. Its function is as follows. Catalyzes the reduction of the delta-24 double bond of sterol intermediates during cholesterol biosynthesis. In addition to its cholesterol-synthesizing activity, can protect cells from oxidative stress by reducing caspase 3 activity during apoptosis induced by oxidative stress. Also protects against amyloid-beta peptide-induced apoptosis. This chain is Delta(24)-sterol reductase (DHCR24), found in Macaca fascicularis (Crab-eating macaque).